A 548-amino-acid polypeptide reads, in one-letter code: Membrane protein insertase YidC (548 aa).

Residues 6 to 26 (NLLVIALLFVSFMIWQAWEQD) form a helical membrane-spanning segment. Residues 28-56 (NPQPQTQQTTQTTTTAAGSAADQGVPASG) are disordered. The segment covering 29–42 (PQPQTQQTTQTTTT) has biased composition (low complexity). A run of 4 helical transmembrane segments spans residues 350–370 (FVGN…GIMY), 424–444 (FPLI…MGSI), 458–478 (LSAQ…MFFI), and 499–519 (PVIF…YYIV).

It belongs to the OXA1/ALB3/YidC family. Type 1 subfamily. Interacts with the Sec translocase complex via SecD. Specifically interacts with transmembrane segments of nascent integral membrane proteins during membrane integration.

It is found in the cell inner membrane. Functionally, required for the insertion and/or proper folding and/or complex formation of integral membrane proteins into the membrane. Involved in integration of membrane proteins that insert both dependently and independently of the Sec translocase complex, as well as at least some lipoproteins. Aids folding of multispanning membrane proteins. The chain is Membrane protein insertase YidC from Salmonella heidelberg (strain SL476).